The sequence spans 554 residues: Potassium-transporting ATPase potassium-binding subunit (554 aa).

The next 10 membrane-spanning stretches (helical) occupy residues 1–21 (MSPV…LALA), 60–80 (PAYL…LYVL), 131–151 (GLAV…VALV), 174–194 (VRVL…CGAI), 246–266 (PGPF…FALT), 279–299 (GYAI…LMMW), 375–395 (GLYG…LMVG), 412–432 (FAAC…AAAM), 481–501 (IGIV…ALAG), and 525–545 (GLLV…ALAL).

This sequence belongs to the KdpA family. The system is composed of three essential subunits: KdpA, KdpB and KdpC.

Its subcellular location is the cell membrane. Part of the high-affinity ATP-driven potassium transport (or Kdp) system, which catalyzes the hydrolysis of ATP coupled with the electrogenic transport of potassium into the cytoplasm. This subunit binds the extracellular potassium ions and delivers the ions to the membrane domain of KdpB through an intramembrane tunnel. The polypeptide is Potassium-transporting ATPase potassium-binding subunit (Streptomyces avermitilis (strain ATCC 31267 / DSM 46492 / JCM 5070 / NBRC 14893 / NCIMB 12804 / NRRL 8165 / MA-4680)).